An 851-amino-acid polypeptide reads, in one-letter code: DNA mismatch repair protein MutS (851 aa).

602-609 (GPNMSGKS) provides a ligand contact to ATP.

The protein belongs to the DNA mismatch repair MutS family.

Its function is as follows. This protein is involved in the repair of mismatches in DNA. It is possible that it carries out the mismatch recognition step. This protein has a weak ATPase activity. This chain is DNA mismatch repair protein MutS, found in Streptococcus pyogenes serotype M12 (strain MGAS2096).